Consider the following 102-residue polypeptide: Pole-localizer protein TmaR (102 aa).

The stretch at 7-34 (IINQARRKNKLKRELQDNQKKIRDNQKR) forms a coiled coil.

It belongs to the pole-localizer TmaR family.

It is found in the cytoplasm. Pole-localizer protein involved in the regulation of several cellular processes. The polypeptide is Pole-localizer protein TmaR (Aliivibrio fischeri (strain ATCC 700601 / ES114) (Vibrio fischeri)).